The following is a 397-amino-acid chain: Potassium channel subfamily K member 4 (397 aa).

Residues 1-3 (MRS) lie on the Cytoplasmic side of the membrane. A helical transmembrane segment spans residues 4-24 (TTLLALLALVLLYLVSGALVF). The Extracellular segment spans residues 25–88 (QALEQPHEQQ…WTNSSNHSSA (64 aa)). Asn81 carries N-linked (GlcNAc...) asparagine glycosylation. The helical intramembrane region spans 89-103 (WNLGSAFFFSGTIIT). Thr104, Ile105, Gly106, and Tyr107 together coordinate K(+). Positions 104–109 (TIGYGN) are selectivity filter 1. The stretch at 104 to 110 (TIGYGNI) is an intramembrane region. Topologically, residues 111 to 118 (ALHTDAGR) are extracellular. A helical membrane pass occupies residues 119 to 151 (LFCIFYALVGIPLFGMLLAGVGDRLGSSLRRGI). Residues 152–173 (GHIEAVFLKWHVPPGLVRMLSA) lie on the Cytoplasmic side of the membrane. The chain crosses the membrane as a helical span at residues 174 to 195 (VLFLLIGCLLFVLTPTFVFSYM). The Extracellular portion of the chain corresponds to 196–200 (ESWSK). The helical intramembrane region spans 201 to 214 (LEAIYFVIVTLTTV). Positions 213, 214, 215, and 216 each coordinate K(+). The tract at residues 213 to 218 (TVGFGD) is selectivity filter 2. Residues 215 to 220 (GFGDYV) lie within the membrane without spanning it. Topologically, residues 221–234 (PGDGTGQNSPAYQP) are extracellular. The chain crosses the membrane as a helical span at residues 235–261 (LVWFWILFGLAYFASVLTTIGNWLRAV). Residues 262-397 (SRRTRAEMGG…GRLRDKAVPV (136 aa)) are Cytoplasmic-facing. Polar residues predominate over residues 282–292 (TVTARVTQRTG). Residues 282-397 (TVTARVTQRT…GRLRDKAVPV (116 aa)) form a disordered region. A compositionally biased stretch (basic residues) spans 369-388 (PRGRRRPNPTKKPSRPRGPG).

This sequence belongs to the two pore domain potassium channel (TC 1.A.1.8) family. As to quaternary structure, homodimer; disulfide-linked. Forms heterodimers with other 2-pore domain K(+) channel subunits, such as KCNK2 and KCNK10. Detected in brain, and at much lower levels in liver, skeletal muscle and testis.

Its subcellular location is the cell membrane. It localises to the cell projection. The protein resides in the axon. It catalyses the reaction K(+)(in) = K(+)(out). The enzyme catalyses Rb(+)(in) = Rb(+)(out). The catalysed reaction is Cs(+)(in) = Cs(+)(out). Its activity is regulated as follows. Activated by various stimuli including intracellular basic pH, mechanical stretch and heat and polyunsaturated fatty acids such as arachidonic acid. K(+) channel that conducts voltage-dependent outward rectifying currents upon membrane depolarization. Voltage sensing is coupled to K(+) electrochemical gradient in an 'ion flux gating' mode where outward but not inward ion flow opens the gate. Converts to voltage-independent 'leak' conductance mode upon stimulation by various stimuli including mechanical membrane stretch, basic pH, heat and lipids. Homo- and heterodimerizes to form functional channels with distinct regulatory and gating properties. At trigeminal A-beta afferent nerves, the heterodimer of KCNK2/TREK-1 and KCNK4/TRAAK is mostly coexpressed at nodes of Ranvier where it conducts voltage-independent mechanosensitive and thermosensitive currents, allowing rapid action potential repolarization, high speed and high frequence saltatory conduction on myelinated nerves to ensure prompt sensory responses. Permeable to other monovalent cations such as Rb(+) and Cs(+). The protein is Potassium channel subfamily K member 4 of Rattus norvegicus (Rat).